The following is a 280-amino-acid chain: 3-hydroxyanthranilate 3,4-dioxygenase (280 aa).

Residues 1–160 (MAIPVNVKKW…SEQYKSGKPD (160 aa)) are domain A (catalytic). Position 43 (Arg43) interacts with O2. Residues His47, Glu53, and His91 each contribute to the Fe cation site. Glu53 serves as a coordination point for substrate. Substrate contacts are provided by Arg95 and Glu105. Positions 161–177 (PAQPIGKMPFFLNTEQV) are linker. The interval 178–280 (MEPFSFQNWL…IALSTSQVPA (103 aa)) is domain B.

Belongs to the 3-HAO family. Monomer. Fe(2+) is required as a cofactor.

The protein localises to the cytoplasm. It localises to the cytosol. The enzyme catalyses 3-hydroxyanthranilate + O2 = (2Z,4Z)-2-amino-3-carboxymuconate 6-semialdehyde. It functions in the pathway cofactor biosynthesis; NAD(+) biosynthesis; quinolinate from L-kynurenine: step 3/3. In terms of biological role, catalyzes the oxidative ring opening of 3-hydroxyanthranilate to 2-amino-3-carboxymuconate semialdehyde, which spontaneously cyclizes to quinolinate. In Xenopus tropicalis (Western clawed frog), this protein is 3-hydroxyanthranilate 3,4-dioxygenase (haao).